The sequence spans 445 residues: NAD(P)H coenzyme A polysulfide/persulfide reductase (445 aa).

A16–A17 lines the FAD pocket. CoA is bound at residue R27. FAD contacts are provided by residues E38–A39 and H45–P47. CoA-binding positions include S44 to C48, Y65 to Y66, and R75. The active-site Redox-active is C48. The FAD site is built by V85, D283, and A301. The CoA site is built by N305 and K361. An FAD-binding site is contributed by Y425. Positions 433 and 441 each coordinate CoA.

This sequence belongs to the class-III pyridine nucleotide-disulfide oxidoreductase family. In terms of assembly, homodimer. Homotetramer. FAD serves as cofactor.

The catalysed reaction is NADP(+) + 2 CoA = CoA-disulfide + NADPH + H(+). It catalyses the reaction NAD(+) + 2 CoA = CoA-disulfide + NADH + H(+). Catalyzes the NAD(P)H-dependent reduction of polysulfide, CoA-polysulfides, and CoA persulfide, as well as the reduction of a range of other small persulfides, including TNB and glutathione persulfides. The likely in vivo substrates are di-, poly-, and persulfide derivatives of coenzyme A, although polysulfide itself is also efficiently reduced. Shows coenzyme A disulfide reductase (CoADR) activity with both NADH and NADPH, with a preference for NADPH. May also play a role in the reduction of elemental sulfur. The sequence is that of NAD(P)H coenzyme A polysulfide/persulfide reductase from Pyrococcus horikoshii (strain ATCC 700860 / DSM 12428 / JCM 9974 / NBRC 100139 / OT-3).